A 212-amino-acid polypeptide reads, in one-letter code: Hevein-like preproprotein (212 aa).

The first 21 residues, 1–21 (MKIRLSITIILLSYTVATVAG), serve as a signal peptide directing secretion. One can recognise a Chitin-binding type-1 domain in the interval 22-64 (QQCGRQGGGRTCPGNICCSQYGYCGTTADYCSPTNNCQSNCWG). 7 cysteine pairs are disulfide-bonded: cysteine 24/cysteine 39, cysteine 33/cysteine 45, cysteine 38/cysteine 52, cysteine 58/cysteine 62, cysteine 100/cysteine 132, cysteine 121/cysteine 155, and cysteine 135/cysteine 191. In terms of domain architecture, Barwin spans 72–193 (ESASNVRATY…VDYQFVDCGN (122 aa)).

CB-HEL interacts strongly with a fungal fruiting body lectin.

Its subcellular location is the vacuole. Functionally, fungal growth inhibitors. Neither CB-HEL nor CD-HEL have chitinase activity, but both have antimicrobial activities. CD-HEL has RNase, but no DNase activity. In Arabidopsis thaliana (Mouse-ear cress), this protein is Hevein-like preproprotein (HEL).